Reading from the N-terminus, the 468-residue chain is H(+)/Cl(-) exchange transporter ClcA (468 aa).

At 1–32 (MIKRERIVKSVLAHVPKDAINQFVSRGSTPTS) the chain is on the cytoplasmic side. Residues 33-69 (FSVLFMAAIVGTLAGLVGTYFEIAVHFVSETRTEWLK) form a helical membrane-spanning segment. Over 70-76 (SEIGSVL) the chain is Periplasmic. The chain crosses the membrane as a helical span at residues 77-100 (PLWLAAILISGALAFIGYYLVNRF). Positions 106–110 (GSGIP) match the Selectivity filter part_1 motif. Position 107 (S107) interacts with chloride. Residues 109-116 (IPEIEGAM) constitute an intramembrane region (helical). Residues 117-123 (DNIRSVR) lie on the Cytoplasmic side of the membrane. A run of 2 helical transmembrane segments spans residues 124–141 (WWRV…ALGS) and 148–166 (EGPT…TDIF). The Selectivity filter part_2 motif lies at 146–150 (GREGP). Topologically, residues 167 to 176 (RVKDDDTRHS) are cytoplasmic. Intramembrane regions (helical) lie at residues 177-189 (LLAS…LAAA) and 193-201 (PLAAIMFVV). Residues 202–214 (EEMRPQFRYSLIS) lie on the Cytoplasmic side of the membrane. A helical transmembrane segment spans residues 215 to 232 (IRAVIISAIMANIVFRAI). The Periplasmic portion of the chain corresponds to 233–252 (NGQEAVITMPQYQSPELQSL). A helical transmembrane segment spans residues 253-281 (WLFLLLGSLFGVFGVVFNKLITIAQDSFV). Residues 282-287 (ALHKND) lie on the Cytoplasmic side of the membrane. A helical transmembrane segment spans residues 288–309 (RKRYLITGTILGGVFGLLLLYV). The Periplasmic segment spans residues 310-329 (PQLTGGGIGLIPDITNGNYS). Transmembrane regions (helical) follow at residues 330-349 (ISIL…LCFG) and 355-376 (GIFA…ASAD). The Selectivity filter part_3 motif lies at 355–359 (GIFAP). 2 residues coordinate chloride: I356 and F357. Over 377–386 (MLLPSLTIEP) the chain is Periplasmic. The helical intramembrane region spans 387–401 (GVFAIAGMGALFAAT). The note=Loop between two helices intramembrane region spans 402–404 (VRA). Positions 405–416 (PITGILLVIEMT) form an intramembrane region, helical. An intramembrane region (note=Loop between two helices) is located at residues 417–421 (NNYYL). A helical transmembrane segment spans residues 422 to 438 (ILPLIITSLGAVIVAQL). The Cytoplasmic segment spans residues 439 to 468 (LGGQPIYSQLLHRTLKNDKLRQQDLPENQA). Residue Y445 coordinates chloride.

It belongs to the chloride channel (TC 2.A.49) family. ClcA subfamily. In terms of assembly, homodimer.

The protein resides in the cell inner membrane. The enzyme catalyses 2 chloride(in) + H(+)(out) = 2 chloride(out) + H(+)(in). In terms of biological role, proton-coupled chloride transporter. Functions as antiport system and exchanges two chloride ions for 1 proton. Probably acts as an electrical shunt for an outwardly-directed proton pump that is linked to amino acid decarboxylation, as part of the extreme acid resistance (XAR) response. The sequence is that of H(+)/Cl(-) exchange transporter ClcA from Vibrio campbellii (strain ATCC BAA-1116).